The sequence spans 96 residues: Citrate lyase acyl carrier protein (96 aa).

Position 14 is an O-(phosphoribosyl dephospho-coenzyme A)serine (S14).

Belongs to the CitD family. As to quaternary structure, oligomer with a subunit composition of (alpha,beta,gamma)6.

It is found in the cytoplasm. Its function is as follows. Covalent carrier of the coenzyme of citrate lyase. This is Citrate lyase acyl carrier protein from Pectobacterium carotovorum subsp. carotovorum (strain PC1).